A 386-amino-acid chain; its full sequence is uncharacterized protein (386 aa).

A run of 12 helical transmembrane segments spans residues 8-28, 43-63, 79-99, 102-122, 134-154, 156-176, 216-236, 241-261, 272-292, 297-317, 342-362, and 365-385; these read VFVI…IAPI, IGLI…PVGV, FFYG…GFLI, IFTG…IAAI, IFNS…GILA, MYGI…AAII, FIIN…LALY, NITI…MALL, LGNI…YLLS, FLTI…SSTA, INIG…ILGI, and MYKF…LRIE.

This sequence belongs to the major facilitator superfamily.

It localises to the cell membrane. This is an uncharacterized protein from Methanocaldococcus jannaschii (strain ATCC 43067 / DSM 2661 / JAL-1 / JCM 10045 / NBRC 100440) (Methanococcus jannaschii).